Consider the following 317-residue polypeptide: Inactive serine protease 45 (317 aa).

The first 35 residues, 1-35, serve as a signal peptide directing secretion; the sequence is MATSLRGLDAGPGSLRRWILICFAALLLLPPRPNL. An N-linked (GlcNAc...) asparagine glycan is attached at Asn40. One can recognise a Peptidase S1 domain in the interval 44–291; it reads PVCGTPWWPD…YTIWIKDQVS (248 aa). A disulfide bond links Cys75 and Cys91. Asn110 is a glycosylation site (N-linked (GlcNAc...) asparagine). Disulfide bonds link Cys172-Cys249, Cys207-Cys230, and Cys239-Cys267. The N-linked (GlcNAc...) asparagine glycan is linked to Asn272.

Belongs to the peptidase S1 family.

It localises to the secreted. The polypeptide is Inactive serine protease 45 (Mus musculus (Mouse)).